Consider the following 446-residue polypeptide: Na(+)-translocating NADH-quinone reductase subunit A (446 aa).

The protein belongs to the NqrA family. As to quaternary structure, composed of six subunits; NqrA, NqrB, NqrC, NqrD, NqrE and NqrF.

It carries out the reaction a ubiquinone + n Na(+)(in) + NADH + H(+) = a ubiquinol + n Na(+)(out) + NAD(+). Functionally, NQR complex catalyzes the reduction of ubiquinone-1 to ubiquinol by two successive reactions, coupled with the transport of Na(+) ions from the cytoplasm to the periplasm. NqrA to NqrE are probably involved in the second step, the conversion of ubisemiquinone to ubiquinol. In Histophilus somni (strain 2336) (Haemophilus somnus), this protein is Na(+)-translocating NADH-quinone reductase subunit A.